Here is an 814-residue protein sequence, read N- to C-terminus: Leucine--tRNA ligase (814 aa).

The 'HIGH' region motif lies at 42–52; sequence PYPSGNLHIGH. The 'KMSKS' region motif lies at 582-586; that stretch reads KMSKS. Position 585 (Lys585) interacts with ATP.

Belongs to the class-I aminoacyl-tRNA synthetase family.

Its subcellular location is the cytoplasm. The enzyme catalyses tRNA(Leu) + L-leucine + ATP = L-leucyl-tRNA(Leu) + AMP + diphosphate. The polypeptide is Leucine--tRNA ligase (Herpetosiphon aurantiacus (strain ATCC 23779 / DSM 785 / 114-95)).